A 179-amino-acid chain; its full sequence is Large ribosomal subunit protein uL5 (179 aa).

It belongs to the universal ribosomal protein uL5 family. As to quaternary structure, part of the 50S ribosomal subunit; part of the 5S rRNA/L5/L18/L25 subcomplex. Contacts the 5S rRNA and the P site tRNA. Forms a bridge to the 30S subunit in the 70S ribosome.

This is one of the proteins that bind and probably mediate the attachment of the 5S RNA into the large ribosomal subunit, where it forms part of the central protuberance. In the 70S ribosome it contacts protein S13 of the 30S subunit (bridge B1b), connecting the 2 subunits; this bridge is implicated in subunit movement. Contacts the P site tRNA; the 5S rRNA and some of its associated proteins might help stabilize positioning of ribosome-bound tRNAs. This chain is Large ribosomal subunit protein uL5, found in Bacillus velezensis (strain DSM 23117 / BGSC 10A6 / LMG 26770 / FZB42) (Bacillus amyloliquefaciens subsp. plantarum).